Consider the following 458-residue polypeptide: Fumarate hydratase class II 2 (458 aa).

Substrate contacts are provided by residues 98-100 (SGT), 123-126 (NPND), 133-135 (SSN), and Thr181. His182 (proton donor/acceptor) is an active-site residue. Residue Ser312 is part of the active site. Residues Ser313 and 318–320 (KVN) contribute to the substrate site.

The protein belongs to the class-II fumarase/aspartase family. Fumarase subfamily. In terms of assembly, homotetramer.

It localises to the cytoplasm. The enzyme catalyses (S)-malate = fumarate + H2O. Its pathway is carbohydrate metabolism; tricarboxylic acid cycle; (S)-malate from fumarate: step 1/1. In terms of biological role, involved in the TCA cycle. Catalyzes the stereospecific interconversion of fumarate to L-malate. This chain is Fumarate hydratase class II 2, found in Pseudomonas aeruginosa (strain ATCC 15692 / DSM 22644 / CIP 104116 / JCM 14847 / LMG 12228 / 1C / PRS 101 / PAO1).